A 126-amino-acid polypeptide reads, in one-letter code: Glycine cleavage system H protein (126 aa).

The 83-residue stretch at 23-105 (AATVGITDHA…YGEGWLLRVR (83 aa)) folds into the Lipoyl-binding domain. The residue at position 64 (K64) is an N6-lipoyllysine.

Belongs to the GcvH family. In terms of assembly, the glycine cleavage system is composed of four proteins: P, T, L and H. The cofactor is (R)-lipoate.

Its function is as follows. The glycine cleavage system catalyzes the degradation of glycine. The H protein shuttles the methylamine group of glycine from the P protein to the T protein. This Rubrobacter xylanophilus (strain DSM 9941 / JCM 11954 / NBRC 16129 / PRD-1) protein is Glycine cleavage system H protein.